The sequence spans 518 residues: Triacylglycerol lipase OBL1 (518 aa).

The helical transmembrane segment at 93-113 (GFVVDFFLNLFSANGGFFGLL) threads the bilayer. Positions 337–341 (GHSLG) match the GXSXG motif. Ser339 functions as the Nucleophile in the catalytic mechanism. Catalysis depends on charge relay system residues Asp403 and His496.

This sequence belongs to the AB hydrolase superfamily. Lipase family. As to expression, expressed in pollen grains, pollen tubes, developing embryos, developing seeds and germinating seeds.

The protein localises to the lipid droplet. It is found in the membrane. It catalyses the reaction 1,2-di-(9Z-octadecenoyl)-glycerol + (9Z)-octadecenoate + H(+) = 1,2,3-tri-(9Z-octadecenoyl)-glycerol + H2O. It carries out the reaction 1-(9Z-octadecenoyl)-glycerol + H2O = glycerol + (9Z)-octadecenoate + H(+). Its function is as follows. Acid lipase that can hydrolyze a range of triacylglycerols without a clear preference for acyl-chains. Can also cleave 1,2-diacylglycerol, 1,3-diacylglycerol and 1-monoacylglycerol, but not phosphatidylcholine, phosphatidylethanolamine, or sterol esters. Required for pollen tube growth. Triacylglycerol hydrolysis by OBL1 may provide acyl groups for the synthesis of membrane lipids in growing pollen tubes. This is Triacylglycerol lipase OBL1 from Arabidopsis thaliana (Mouse-ear cress).